Consider the following 679-residue polypeptide: Altered inheritance of mitochondria protein 21 (679 aa).

The disordered stretch occupies residues 1 to 95 (MPSEVTPKVP…EELNNVMNNT (95 aa)). The span at 9–19 (VPERPSRRKTS) shows a compositional bias: basic and acidic residues. At threonine 18 the chain carries Phosphothreonine. Phosphoserine is present on serine 36. Threonine 58 carries the post-translational modification Phosphothreonine. Serine 70 is subject to Phosphoserine. Threonine 85 carries the post-translational modification Phosphothreonine. Over residues 86 to 95 (EELNNVMNNT) the composition is skewed to polar residues. Serine 104 carries the post-translational modification Phosphoserine. Disordered regions lie at residues 107 to 522 (SKHN…EKIE) and 548 to 679 (LMDT…FHSL). Basic residues predominate over residues 109–119 (HNIHSVSRKKS). 2 stretches are compositionally biased toward polar residues: residues 133–149 (QNGQ…TNPS) and 164–178 (SAIS…SNNE). The segment covering 179–213 (VTEHSDSEDLTEKQKVHAALDNEAGDGSHFEEKLI) has biased composition (basic and acidic residues). Phosphoserine occurs at positions 183, 206, and 231. The span at 243–272 (SDDKAEKFTKHPESSLEELQKHQEQQEEKI) shows a compositional bias: basic and acidic residues. Phosphothreonine is present on threonine 277. At serine 284 the chain carries Phosphoserine. A compositionally biased stretch (polar residues) spans 296–323 (EVNSQPQGPSDTETVIAATSSNVPSQIA). Phosphoserine is present on serine 324. Composition is skewed to basic and acidic residues over residues 339-351 (KKDF…KEEL) and 372-383 (EESKIPKIPSER). The interval 383–396 (RPKRRAPPPVPKKP) is interaction with SH3 domain of ABP1. 2 stretches are compositionally biased toward polar residues: residues 414–427 (DLHN…TTAS) and 437–452 (SSIT…TSKL). Residues 471 to 482 (LEKKLSSPDTES) show a composition bias toward basic and acidic residues. A compositionally biased stretch (polar residues) spans 483 to 492 (KLGTQDQSQA). Residues 501 to 512 (RRGRGPRGRKLP) are compositionally biased toward basic residues. Residue threonine 552 is modified to Phosphothreonine. Basic and acidic residues predominate over residues 556-576 (QAERALDEKSKSIPEEQREQS). A Phosphoserine modification is found at serine 576. Polar residues predominate over residues 603–613 (PLSQLPQTNAV). Phosphoserine occurs at positions 620, 623, 625, 627, 667, 671, 675, and 678. The segment covering 667-679 (SALHSEEASFHSL) has biased composition (basic and acidic residues).

Belongs to the AIM21 family. In terms of assembly, interacts with ribosomes. Interacts with ABP1.

It localises to the cytoplasm. The protein localises to the cytoskeleton. It is found in the actin patch. Its function is as follows. Involved in mitochondrial migration along actin filaments. This is Altered inheritance of mitochondria protein 21 (AIM21) from Saccharomyces cerevisiae (strain YJM789) (Baker's yeast).